The following is a 66-amino-acid chain: Large ribosomal subunit protein bL35 (66 aa).

2 stretches are compositionally biased toward basic residues: residues 1 to 15 (MPKLKTKSGAKKRFK) and 24 to 40 (HAQRGKRHGMIKRTKKQ). The disordered stretch occupies residues 1 to 40 (MPKLKTKSGAKKRFKVTGTGKVMHAQRGKRHGMIKRTKKQ).

Belongs to the bacterial ribosomal protein bL35 family.

This is Large ribosomal subunit protein bL35 from Bradyrhizobium sp. (strain ORS 278).